The primary structure comprises 315 residues: Putative S-adenosyl-L-methionine-dependent methyltransferase MAV_4557 (315 aa).

Residues aspartate 134 and 163-164 (DL) each bind S-adenosyl-L-methionine.

It belongs to the UPF0677 family.

Its function is as follows. Exhibits S-adenosyl-L-methionine-dependent methyltransferase activity. The protein is Putative S-adenosyl-L-methionine-dependent methyltransferase MAV_4557 of Mycobacterium avium (strain 104).